The chain runs to 177 residues: Large ribosomal subunit protein uL5c (177 aa).

This sequence belongs to the universal ribosomal protein uL5 family. Part of the 50S ribosomal subunit; contacts the 5S rRNA.

The protein localises to the plastid. It is found in the chloroplast. Binds 5S rRNA, forms part of the central protuberance of the 50S subunit. This chain is Large ribosomal subunit protein uL5c (rpl5), found in Cyanidioschyzon merolae (strain NIES-3377 / 10D) (Unicellular red alga).